Here is a 142-residue protein sequence, read N- to C-terminus: Large ribosomal subunit protein uL13 (142 aa).

Belongs to the universal ribosomal protein uL13 family. Part of the 50S ribosomal subunit.

Functionally, this protein is one of the early assembly proteins of the 50S ribosomal subunit, although it is not seen to bind rRNA by itself. It is important during the early stages of 50S assembly. This Xanthomonas campestris pv. campestris (strain ATCC 33913 / DSM 3586 / NCPPB 528 / LMG 568 / P 25) protein is Large ribosomal subunit protein uL13.